The following is a 3135-amino-acid chain: Gametocyte surface protein P230 (3135 aa).

The N-terminal stretch at 1–20 (MKKIITLKNLFLIILVYIFS) is a signal peptide. N-linked (GlcNAc...) asparagine glycans are attached at residues Asn76, Asn111, Asn135, and Asn239. The tract at residues 266-470 (EEDMSPRDNF…EEKDEGGESF (205 aa)) is disordered. Composition is skewed to acidic residues over residues 276–321 (VIDD…EEQL) and 329–345 (VGAE…DEDS). Residues 346–358 (VEARDGDMIRVDE) show a composition bias toward basic and acidic residues. 2 stretches are compositionally biased toward acidic residues: residues 376-444 (DVDE…EGEY) and 458-467 (GDEEEKDEGG). Asn585 carries an N-linked (GlcNAc...) asparagine glycan. 2 6-Cys domains span residues 589-730 (KEYV…VEPY) and 733-887 (KING…INEE). 4 disulfide bridges follow: Cys593–Cys611, Cys626–Cys706, Cys737–Cys781, and Cys804–Cys862. Residues Asn821, Asn829, Asn889, Asn961, Asn1079, Asn1089, and Asn1153 are each glycosylated (N-linked (GlcNAc...) asparagine). 4 consecutive 6-Cys domains span residues 918 to 1133 (HDYT…ISKQ), 1136 to 1275 (KIKG…LKRE), 1285 to 1432 (KIYK…VSKR), and 1435 to 1560 (KVKG…YKKL). Cystine bridges form between Cys1140–Cys1161, Cys1175–Cys1251, and Cys1200–Cys1249. N-linked (GlcNAc...) asparagine glycosylation is found at Asn1267, Asn1300, Asn1452, Asn1492, Asn1508, Asn1621, and Asn1624. Cystine bridges form between Cys1439-Cys1459, Cys1473-Cys1534, and Cys1483-Cys1532. 4 consecutive 6-Cys domains span residues 1694-1907 (NRHV…ISNS), 1910-2035 (KING…LNKD), 2052-2199 (NVHL…VRKN), and 2204-2374 (SFKL…SDNR). 2 cysteine pairs are disulfide-bonded: Cys1698-Cys1726 and Cys1740-Cys1881. Asn1753, Asn1804, Asn1882, Asn1920, Asn1954, and Asn1972 each carry an N-linked (GlcNAc...) asparagine glycan. Intrachain disulfides connect Cys1914-Cys1938, Cys1952-Cys2017, Cys1963-Cys2015, and Cys2056-Cys2074. N-linked (GlcNAc...) asparagine glycans are attached at residues Asn2178 and Asn2199. Intrachain disulfides connect Cys2208-Cys2229, Cys2243-Cys2356, and Cys2254-Cys2354. N-linked (GlcNAc...) asparagine glycosylation is found at Asn2312 and Asn2351. A disordered region spans residues 2410–2432 (IKQQQEEEQQEQILKDQDDRLSR). Basic and acidic residues predominate over residues 2422–2432 (ILKDQDDRLSR). N-linked (GlcNAc...) asparagine glycans are attached at residues Asn2439, Asn2457, Asn2466, Asn2504, Asn2586, Asn2611, Asn2650, Asn2677, and Asn2688. 6-Cys domains follow at residues 2448 to 2663 (NEHI…ISSN), 2666 to 2827 (IIHG…IDEK), 2831 to 2979 (GKDI…INQG), and 2982 to 3113 (EIHG…PEPQ). 2 cysteine pairs are disulfide-bonded: Cys2452/Cys2476 and Cys2490/Cys2638. Cystine bridges form between Cys2670-Cys2706, Cys2720-Cys2804, and Cys2730-Cys2802. Asn2952 carries N-linked (GlcNAc...) asparagine glycosylation. A disulfide bridge links Cys2986 with Cys3010. N-linked (GlcNAc...) asparagine glycosylation is found at Asn3011, Asn3016, Asn3066, Asn3093, and Asn3096. 2 cysteine pairs are disulfide-bonded: Cys3024-Cys3090 and Cys3035-Cys3088.

In terms of assembly, heterodimer; heterodimerizes with PF45/48. May be processed into a 310 kDa form as the parasite emerges from the host erythrocytes.

The protein resides in the cell surface. Its subcellular location is the cell membrane. Its function is as follows. Gametocyte surface protein required for male/female gamete fusion. Also required for male gamete exflagellation and interaction with host erythrocytes. The protein is Gametocyte surface protein P230 (PFS230) of Plasmodium falciparum (isolate 3D7).